The primary structure comprises 283 residues: 2-dehydro-3-deoxyphosphooctonate aldolase (283 aa).

The protein belongs to the KdsA family.

It localises to the cytoplasm. The enzyme catalyses D-arabinose 5-phosphate + phosphoenolpyruvate + H2O = 3-deoxy-alpha-D-manno-2-octulosonate-8-phosphate + phosphate. It participates in carbohydrate biosynthesis; 3-deoxy-D-manno-octulosonate biosynthesis; 3-deoxy-D-manno-octulosonate from D-ribulose 5-phosphate: step 2/3. The protein operates within bacterial outer membrane biogenesis; lipopolysaccharide biosynthesis. The polypeptide is 2-dehydro-3-deoxyphosphooctonate aldolase (Vibrio parahaemolyticus serotype O3:K6 (strain RIMD 2210633)).